Consider the following 446-residue polypeptide: Amino-acid acetyltransferase (446 aa).

The N-acetyltransferase domain maps to 299–431; that stretch reads EQVRDAEIDD…SHLPMKKQKL (133 aa).

Belongs to the acetyltransferase family. ArgA subfamily.

Its subcellular location is the cytoplasm. The catalysed reaction is L-glutamate + acetyl-CoA = N-acetyl-L-glutamate + CoA + H(+). Its pathway is amino-acid biosynthesis; L-arginine biosynthesis; N(2)-acetyl-L-ornithine from L-glutamate: step 1/4. The polypeptide is Amino-acid acetyltransferase (Aliivibrio fischeri (strain MJ11) (Vibrio fischeri)).